We begin with the raw amino-acid sequence, 156 residues long: Small ribosomal subunit protein uS7cz/uS7cy (156 aa).

Belongs to the universal ribosomal protein uS7 family. In terms of assembly, part of the 30S ribosomal subunit.

The protein localises to the plastid. It is found in the chloroplast. In terms of biological role, one of the primary rRNA binding proteins, it binds directly to 16S rRNA where it nucleates assembly of the head domain of the 30S subunit. This is Small ribosomal subunit protein uS7cz/uS7cy (rps7-A) from Saccharum hybrid (Sugarcane).